We begin with the raw amino-acid sequence, 399 residues long: Ubiquitin-like modifier-activating enzyme 5 (399 aa).

ATP is bound by residues Gly-76, Asp-97, Lys-120, Asn-143, and Asn-177. Zn(2+) contacts are provided by Cys-219 and Cys-222. Residue Cys-243 is the Glycyl thioester intermediate of the active site. Zn(2+) is bound by residues Cys-296 and Cys-301.

This sequence belongs to the ubiquitin-activating E1 family. UBA5 subfamily.

In terms of biological role, E1-like enzyme which activates UFM1. The protein is Ubiquitin-like modifier-activating enzyme 5 of Drosophila mojavensis (Fruit fly).